The sequence spans 706 residues: Solute carrier organic anion transporter family member 6C1 (706 aa).

Residues Met-1 to Lys-24 are disordered. At Met-1–Asp-94 the chain is on the cytoplasmic side. Basic and acidic residues predominate over residues Lys-7–Lys-24. A helical membrane pass occupies residues Gly-95 to Leu-118. The Extracellular portion of the chain corresponds to Asn-119–Thr-130. The chain crosses the membrane as a helical span at residues Glu-131–Ala-151. Over His-152 to Arg-159 the chain is Cytoplasmic. Residues Thr-160–Pro-180 form a helical membrane-spanning segment. At Phe-181–Cys-218 the chain is on the extracellular side. The N-linked (GlcNAc...) asparagine glycan is linked to Asn-214. Residues Ile-219–Ile-241 traverse the membrane as a helical segment. The Cytoplasmic portion of the chain corresponds to Thr-242–Cys-253. A helical membrane pass occupies residues Gly-254–Gln-277. Topologically, residues Asn-278–Ser-301 are extracellular. The helical transmembrane segment at Gly-302–Phe-324 threads the bilayer. Topologically, residues Pro-325–Met-374 are cytoplasmic. Residues Leu-375 to Pro-396 form a helical membrane-spanning segment. Residues His-397–Ala-410 lie on the Extracellular side of the membrane. The helical transmembrane segment at Ser-411–Ile-432 threads the bilayer. Residues Val-433–Lys-445 are Cytoplasmic-facing. The chain crosses the membrane as a helical span at residues Phe-446–Cys-466. At Gln-467–Leu-565 the chain is on the extracellular side. Residues Gly-485–Lys-540 form the Kazal-like domain. A glycan (N-linked (GlcNAc...) asparagine) is linked at Asn-486. 3 disulfides stabilise this stretch: Cys-491-Cys-521, Cys-497-Cys-517, and Cys-506-Cys-538. N-linked (GlcNAc...) asparagine glycosylation occurs at Asn-535. A helical membrane pass occupies residues Lys-566–Ile-589. At Ser-590–Ser-604 the chain is on the cytoplasmic side. A helical transmembrane segment spans residues Leu-605–Phe-624. The Extracellular portion of the chain corresponds to Arg-625 to Asn-652. The chain crosses the membrane as a helical span at residues Ile-653–Tyr-675. The Cytoplasmic portion of the chain corresponds to Ala-676–Ala-706.

This sequence belongs to the organo anion transporter (TC 2.A.60) family. Component of the CatSper complex or CatSpermasome composed of the core pore-forming members CATSPER1, CATSPER2, CATSPER3 and CATSPER4 as well as auxiliary members CATSPERB, CATSPERG2, CATSPERD, CATSPERE, CATSPERZ, C2CD6/CATSPERT, SLCO6C1, TMEM249, TMEM262 and EFCAB9. HSPA1 may be an additional auxiliary complex member. The core complex members CATSPER1, CATSPER2, CATSPER3 and CATSPER4 form a heterotetrameric channel. The auxiliary CATSPERB, CATSPERG2, CATSPERD and CATSPERE subunits form a pavilion-like structure over the pore which stabilizes the complex through interactions with CATSPER4, CATSPER3, CATSPER1 and CATSPER2 respectively. SLCO6C1 interacts with CATSPERE and TMEM262/CATSPERH interacts with CATSPERB, further stabilizing the complex. C2CD6/CATSPERT interacts at least with CATSPERD and is required for targeting the CatSper complex in the flagellar membrane.

Its subcellular location is the cell projection. The protein resides in the cilium. It localises to the flagellum membrane. In terms of biological role, auxiliary component of the CatSper complex, a complex involved in sperm cell hyperactivation. The polypeptide is Solute carrier organic anion transporter family member 6C1 (Mus musculus (Mouse)).